Here is a 140-residue protein sequence, read N- to C-terminus: Aspartate 1-decarboxylase (140 aa).

Catalysis depends on Ser25, which acts as the Schiff-base intermediate with substrate; via pyruvic acid. Ser25 is subject to Pyruvic acid (Ser). Thr57 contacts substrate. Tyr58 acts as the Proton donor in catalysis. 73-75 (GAA) provides a ligand contact to substrate.

The protein belongs to the PanD family. As to quaternary structure, heterooctamer of four alpha and four beta subunits. Pyruvate is required as a cofactor. Is synthesized initially as an inactive proenzyme, which is activated by self-cleavage at a specific serine bond to produce a beta-subunit with a hydroxyl group at its C-terminus and an alpha-subunit with a pyruvoyl group at its N-terminus.

The protein resides in the cytoplasm. The catalysed reaction is L-aspartate + H(+) = beta-alanine + CO2. It functions in the pathway cofactor biosynthesis; (R)-pantothenate biosynthesis; beta-alanine from L-aspartate: step 1/1. Functionally, catalyzes the pyruvoyl-dependent decarboxylation of aspartate to produce beta-alanine. The polypeptide is Aspartate 1-decarboxylase (Persephonella marina (strain DSM 14350 / EX-H1)).